We begin with the raw amino-acid sequence, 340 residues long: Phospho-N-acetylmuramoyl-pentapeptide-transferase (340 aa).

A run of 9 helical transmembrane segments spans residues 22–42, 69–89, 95–115, 129–149, 156–176, 186–206, 209–229, 235–257, and 316–336; these read VVVPFGLSALGSALLGSLLIP, TMGGISFLPVGLLVAGIWSGW, AVALLTLAYSFVGWLDDWLVI, LLLQVGVALGFCVYLAWQGIP, GIGTLSLGWLFWPLALFVLVG, GMDGLAAGVVAILLIGLGLLH, PELSVLAFTLSGACLGFLVHN, LFMGDTGSLGLGGALAGLALLGD, and VVGSFYGVTALLVGLGWAWWH.

Belongs to the glycosyltransferase 4 family. MraY subfamily. Mg(2+) is required as a cofactor.

It localises to the cell inner membrane. The catalysed reaction is UDP-N-acetyl-alpha-D-muramoyl-L-alanyl-gamma-D-glutamyl-meso-2,6-diaminopimeloyl-D-alanyl-D-alanine + di-trans,octa-cis-undecaprenyl phosphate = di-trans,octa-cis-undecaprenyl diphospho-N-acetyl-alpha-D-muramoyl-L-alanyl-D-glutamyl-meso-2,6-diaminopimeloyl-D-alanyl-D-alanine + UMP. The protein operates within cell wall biogenesis; peptidoglycan biosynthesis. Functionally, catalyzes the initial step of the lipid cycle reactions in the biosynthesis of the cell wall peptidoglycan: transfers peptidoglycan precursor phospho-MurNAc-pentapeptide from UDP-MurNAc-pentapeptide onto the lipid carrier undecaprenyl phosphate, yielding undecaprenyl-pyrophosphoryl-MurNAc-pentapeptide, known as lipid I. The polypeptide is Phospho-N-acetylmuramoyl-pentapeptide-transferase (Synechococcus sp. (strain JA-2-3B'a(2-13)) (Cyanobacteria bacterium Yellowstone B-Prime)).